The sequence spans 193 residues: Probable GTP-binding protein EngB (193 aa).

In terms of domain architecture, EngB-type G spans 22–193 (GLPEFAFAGR…LIAVLESYLA (172 aa)). Residues 30 to 37 (GRSNVGKS), 57 to 61 (GKTQG), 75 to 78 (DLPG), 142 to 145 (TKID), and 173 to 175 (FSS) contribute to the GTP site. Ser-37 and Thr-59 together coordinate Mg(2+).

This sequence belongs to the TRAFAC class TrmE-Era-EngA-EngB-Septin-like GTPase superfamily. EngB GTPase family. Mg(2+) serves as cofactor.

Necessary for normal cell division and for the maintenance of normal septation. In Desulfotalea psychrophila (strain LSv54 / DSM 12343), this protein is Probable GTP-binding protein EngB.